A 213-amino-acid polypeptide reads, in one-letter code: MTKPIVVTGTDTGIGKTVFAAALAGALDAFYWKPVQAGIEDETDRQAVLRLSGLPDARLLPEAYRLNTPASPHLAAEIDGVTIDAEALALPEIDGPLVVEGAGGLLVPLTRAITYIDIFARWRAPVVLCARTTLGTINHTLLSIEALRARAIPLLGVAFIGDENVESERVIVQIGRVPRLGRLPRLVEVTADALRAAFAQNFNTDDFLKDPAS.

Position 13 to 18 (13 to 18) interacts with ATP; that stretch reads GIGKTV. T17 lines the Mg(2+) pocket. K33 is an active-site residue. Position 100 (E100) interacts with Mg(2+). Residues 100 to 103 and 184 to 186 each bind ATP; these read EGAG and PRL.

The protein belongs to the dethiobiotin synthetase family. In terms of assembly, homodimer. Requires Mg(2+) as cofactor.

It localises to the cytoplasm. It catalyses the reaction (7R,8S)-7,8-diammoniononanoate + CO2 + ATP = (4R,5S)-dethiobiotin + ADP + phosphate + 3 H(+). The protein operates within cofactor biosynthesis; biotin biosynthesis; biotin from 7,8-diaminononanoate: step 1/2. Functionally, catalyzes a mechanistically unusual reaction, the ATP-dependent insertion of CO2 between the N7 and N8 nitrogen atoms of 7,8-diaminopelargonic acid (DAPA, also called 7,8-diammoniononanoate) to form a ureido ring. In Rhodopseudomonas palustris (strain HaA2), this protein is ATP-dependent dethiobiotin synthetase BioD.